The primary structure comprises 586 residues: MFS-type transporter ucsD (586 aa).

The disordered stretch occupies residues 1 to 56 (MSRNSGTTLEDGPLHADPTTEAPNNATVTTNVTANDENTEKEVDADAAAAAPAEAP). 2 stretches are compositionally biased toward low complexity: residues 19-36 (TTEA…TAND) and 46-56 (DAAAAAPAEAP). 2 N-linked (GlcNAc...) asparagine glycosylation sites follow: N25 and N31. A run of 8 helical transmembrane segments spans residues 65 to 85 (WAIV…GTII), 101 to 121 (SFIW…PLMA), 131 to 151 (WLTL…GGAN), 164 to 184 (GFGG…LVPL), 192 to 212 (GIVQ…GGLL), 220 to 240 (WVFY…FFFL), 263 to 283 (AIFI…GAVY), and 290 to 310 (VIVP…YEWT). N324 carries an N-linked (GlcNAc...) asparagine glycan. Helical transmembrane passes span 330–350 (VLGV…FMPI), 368–388 (LPLF…LAKF), 393–413 (PMHL…SLLD), 420–440 (AWAC…AILL), 458–478 (VWTF…SAIF), and 532–552 (LRTV…LIWL).

This sequence belongs to the major facilitator superfamily.

Its subcellular location is the membrane. MFS-type transporter; part of the gene cluster that mediates the biosynthesis of UCS1025A, a member of the pyrrolizidinone family that acts as a strong telomerase inhibitor and displays potent antibacterial and antitumor properties. These compounds share a hemiaminal-containing pyrrolizidinone core fused with a gamma-lactone, giving a furopyrrolizidine that is connected to a decalin fragment. The sequence is that of MFS-type transporter ucsD from Acremonium sp.